The sequence spans 97 residues: Coiled-coil domain-containing protein 167 (97 aa).

Positions 10 to 79 form a coiled coil; the sequence is GVALEIDGLE…LRQENRKNML (70 aa). A helical membrane pass occupies residues 78 to 95; that stretch reads MLLSVAIFILLTLVYAYW.

It is found in the membrane. The chain is Coiled-coil domain-containing protein 167 (CCDC167) from Homo sapiens (Human).